The sequence spans 157 residues: uncharacterized protein (157 aa).

A compositionally biased stretch (basic and acidic residues) spans 1 to 11; that stretch reads MGDLEGQDRPD. Residues 1–22 are disordered; that stretch reads MGDLEGQDRPDPISTMVGPSGT.

It is found in the mitochondrion. This is an uncharacterized protein from Arabidopsis thaliana (Mouse-ear cress).